Reading from the N-terminus, the 452-residue chain is Pup--protein ligase (452 aa).

Glu-9 is a Mg(2+) binding site. Arg-53 contacts ATP. Tyr-55 lines the Mg(2+) pocket. The Proton acceptor role is filled by Asp-57. Glu-63 provides a ligand contact to Mg(2+). ATP-binding residues include Thr-66 and Trp-419.

The protein belongs to the Pup ligase/Pup deamidase family. Pup-conjugating enzyme subfamily.

The enzyme catalyses ATP + [prokaryotic ubiquitin-like protein]-L-glutamate + [protein]-L-lysine = ADP + phosphate + N(6)-([prokaryotic ubiquitin-like protein]-gamma-L-glutamyl)-[protein]-L-lysine.. The protein operates within protein degradation; proteasomal Pup-dependent pathway. It functions in the pathway protein modification; protein pupylation. Its function is as follows. Catalyzes the covalent attachment of the prokaryotic ubiquitin-like protein modifier Pup to the proteasomal substrate proteins, thereby targeting them for proteasomal degradation. This tagging system is termed pupylation. The ligation reaction involves the side-chain carboxylate of the C-terminal glutamate of Pup and the side-chain amino group of a substrate lysine. The protein is Pup--protein ligase of Mycobacterium ulcerans (strain Agy99).